The chain runs to 445 residues: Phosphoglucosamine mutase (445 aa).

S99 acts as the Phosphoserine intermediate in catalysis. The Mg(2+) site is built by S99, D242, D244, and D246. Position 99 is a phosphoserine (S99).

The protein belongs to the phosphohexose mutase family. The cofactor is Mg(2+). Post-translationally, activated by phosphorylation.

The catalysed reaction is alpha-D-glucosamine 1-phosphate = D-glucosamine 6-phosphate. Functionally, catalyzes the conversion of glucosamine-6-phosphate to glucosamine-1-phosphate. This is Phosphoglucosamine mutase from Helicobacter pylori (strain Shi470).